We begin with the raw amino-acid sequence, 222 residues long: Kinetochore protein Spc25 (222 aa).

Residues 51–86 adopt a coiled-coil conformation; it reads RHQRKVGKLQKVLMERREELDKRVSFIEELDRELEA.

Belongs to the SPC25 family. In terms of assembly, component of the Ndc80 complex, which is composed of Ndc80, Nuf2 and Spc25.

It is found in the nucleus. The protein localises to the chromosome. The protein resides in the centromere. Its subcellular location is the kinetochore. Functionally, acts as a component of the essential kinetochore-associated Ndc80 complex, which is required for chromosome segregation and spindle checkpoint activity during meiosis and mitosis. Required for kinetochore integrity and the organization of stable microtubule binding sites in the outer plate of the kinetochore. Participates in SAC signaling that responds specifically to disruptions in spindle microtubule dynamics. The NDC80 complex synergistically enhances the affinity of the SKA1 complex for microtubules and may allow the NDC80 complex to track depolymerizing microtubules. This Drosophila mauritiana (Fruit fly) protein is Kinetochore protein Spc25.